Here is a 539-residue protein sequence, read N- to C-terminus: MHDKILILDFGSQVTQLIARRVREAHVYCEIHPNDVSDEFVREFAPKAVILSGSHASTYEDHQLRAPQAVWDLGVPVLGICYGMQTMAVQLGGKVEWSDHREFGYAEMRAHGHTRLLDGIEDFTTAEGHGMLKVWMSHGDKVAELPPGFALMASTPSCPIAGMADEARGYYAVQFHPEVTHTVKGRQIIERFVLQIAGAKPDWIMSNHIEEAVAKIREQVGDEEVILGLSGGVDSSVAAALIHRAIGDQLTCVFVDHGLLRLNEGKMVLDMFEGRLHAKVVHVDASEQFLGHLTGVTDPEAKRKIIGREFVEVFQAEAKKLSKAKWLAQGTIYPDVVESGGTKTKKATTIKSHHNVGGLPETLGLKLLEPLRDLFKDEVRELGVALGLPPEMVYRHPFPGPGLGVRILGEVKREYADLLRRADAIFIEELRGTTATTQDAAAGLCGEADVGKTWYDLTSQAFAVFLPVKSVGVMGDGRTYDYVTSLRAVQTTDFMTAHWAHLPYALLGRASNRIINEVRGINRVVYDISGKPPATIEWE.

In terms of domain architecture, Glutamine amidotransferase type-1 spans K4–D202. C81 functions as the Nucleophile in the catalytic mechanism. Catalysis depends on residues H176 and E178. Residues W203–R395 form the GMPS ATP-PPase domain. Residue S230 to S236 coordinates ATP.

Homodimer.

The enzyme catalyses XMP + L-glutamine + ATP + H2O = GMP + L-glutamate + AMP + diphosphate + 2 H(+). It functions in the pathway purine metabolism; GMP biosynthesis; GMP from XMP (L-Gln route): step 1/1. In terms of biological role, catalyzes the synthesis of GMP from XMP. In Burkholderia ambifaria (strain MC40-6), this protein is GMP synthase [glutamine-hydrolyzing].